The sequence spans 292 residues: uncharacterized protein (292 aa).

A Glycyl lysine isopeptide (Lys-Gly) (interchain with G-Cter in SUMO2) cross-link involves residue K8. Residues 47–67 are disordered; it reads TKRKMLPSSSSRMRSDGFDEE. K76 is covalently cross-linked (Glycyl lysine isopeptide (Lys-Gly) (interchain with G-Cter in SUMO2)). The residue at position 94 (N94) is a Phosphothreonine. 2 positions are modified to phosphoserine: K96 and F97. The disordered stretch occupies residues 122–292; it reads ETDSDQQDIT…ERSAESSEDD (171 aa). A Phosphothreonine modification is found at T123. Phosphoserine occurs at positions 125 and 126. Residues 128-140 show a composition bias toward polar residues; it reads QDITNGKKTSPQV. Basic residues predominate over residues 147 to 173; the sequence is SRKHKKSKKSHKKKQKKRSHKKQKKSK. Positions 180–194 are enriched in polar residues; it reads TADSSSEFSEETGAS. Composition is skewed to basic residues over residues 197–215 and 247–259; these read RKGK…KSLK and KKTK…KKAH. The segment covering 280–292 has biased composition (basic and acidic residues); it reads ATDERSAESSEDD.

This is an uncharacterized protein from Homo sapiens (Human).